Here is a 953-residue protein sequence, read N- to C-terminus: UvrABC system protein A (953 aa).

33–40 lines the ATP pocket; that stretch reads GLSGSGKS. 2 ABC transporter domains span residues 320-599 and 619-949; these read WGST…EESI and GHDN…RYLK. Position 652 to 659 (652 to 659) interacts with ATP; that stretch reads GVSGSGKS. The C4-type zinc finger occupies 752-778; it reads CEACQGDGLIKIEMHFLPDVYVKCDIC.

This sequence belongs to the ABC transporter superfamily. UvrA family. In terms of assembly, forms a heterotetramer with UvrB during the search for lesions.

Its subcellular location is the cytoplasm. In terms of biological role, the UvrABC repair system catalyzes the recognition and processing of DNA lesions. UvrA is an ATPase and a DNA-binding protein. A damage recognition complex composed of 2 UvrA and 2 UvrB subunits scans DNA for abnormalities. When the presence of a lesion has been verified by UvrB, the UvrA molecules dissociate. This is UvrABC system protein A from Rickettsia bellii (strain RML369-C).